The primary structure comprises 92 residues: Elongation factor 1-beta (92 aa).

This sequence belongs to the EF-1-beta/EF-1-delta family.

In terms of biological role, promotes the exchange of GDP for GTP in EF-1-alpha/GDP, thus allowing the regeneration of EF-1-alpha/GTP that could then be used to form the ternary complex EF-1-alpha/GTP/AAtRNA. In Pyrobaculum neutrophilum (strain DSM 2338 / JCM 9278 / NBRC 100436 / V24Sta) (Thermoproteus neutrophilus), this protein is Elongation factor 1-beta.